The following is a 234-amino-acid chain: Endonuclease NucS (234 aa).

The protein belongs to the NucS endonuclease family.

It is found in the cytoplasm. In terms of biological role, cleaves both 3' and 5' ssDNA extremities of branched DNA structures. The chain is Endonuclease NucS from Bifidobacterium adolescentis (strain ATCC 15703 / DSM 20083 / NCTC 11814 / E194a).